The chain runs to 88 residues: MANIKSAKKRIKVIETKTLRNKMLKSSLKTTIKNFLTVVEGKNVEEAKAAYKTAARALDMSVSKGIIHKNKAARTKSRLAAKLNALNA.

Belongs to the bacterial ribosomal protein bS20 family.

Its function is as follows. Binds directly to 16S ribosomal RNA. This Clostridium botulinum (strain 657 / Type Ba4) protein is Small ribosomal subunit protein bS20.